The sequence spans 255 residues: NAD-dependent protein deacylase (255 aa).

The 252-residue stretch at 1–252 (MPKLVVFSGA…AEIEQELEQF (252 aa)) folds into the Deacetylase sirtuin-type domain. 9-28 (GAGLSAESGLETFRDNGGLW) contacts NAD(+). Residues Tyr53 and Arg56 each contribute to the substrate site. Residue 103–106 (QNVD) coordinates NAD(+). Catalysis depends on His121, which acts as the Proton acceptor. Positions 129, 132, 148, and 151 each coordinate Zn(2+). Residues 190 to 192 (GTS), 218 to 220 (NLQ), and Thr238 contribute to the NAD(+) site.

It belongs to the sirtuin family. Class III subfamily. The cofactor is Zn(2+).

Its subcellular location is the cytoplasm. It carries out the reaction N(6)-acetyl-L-lysyl-[protein] + NAD(+) + H2O = 2''-O-acetyl-ADP-D-ribose + nicotinamide + L-lysyl-[protein]. The catalysed reaction is N(6)-succinyl-L-lysyl-[protein] + NAD(+) + H2O = 2''-O-succinyl-ADP-D-ribose + nicotinamide + L-lysyl-[protein]. Functionally, NAD-dependent lysine deacetylase and desuccinylase that specifically removes acetyl and succinyl groups on target proteins. Modulates the activities of several proteins which are inactive in their acylated form. The chain is NAD-dependent protein deacylase from Helicobacter hepaticus (strain ATCC 51449 / 3B1).